The primary structure comprises 638 residues: tRNA uridine 5-carboxymethylaminomethyl modification enzyme MnmG (638 aa).

Residues 13 to 18 (GGGHAG), V125, and S180 contribute to the FAD site. NAD(+) is bound at residue 273–287 (GPRYCPSIEDKIHRF). Q370 serves as a coordination point for FAD.

This sequence belongs to the MnmG family. In terms of assembly, homodimer. Heterotetramer of two MnmE and two MnmG subunits. Requires FAD as cofactor.

The protein localises to the cytoplasm. Its function is as follows. NAD-binding protein involved in the addition of a carboxymethylaminomethyl (cmnm) group at the wobble position (U34) of certain tRNAs, forming tRNA-cmnm(5)s(2)U34. This is tRNA uridine 5-carboxymethylaminomethyl modification enzyme MnmG from Cellvibrio japonicus (strain Ueda107) (Pseudomonas fluorescens subsp. cellulosa).